We begin with the raw amino-acid sequence, 122 residues long: uncharacterized protein (122 aa).

This is an uncharacterized protein from Methanothermobacter thermautotrophicus (Methanobacterium thermoformicicum).